The sequence spans 225 residues: Ribulose-phosphate 3-epimerase (225 aa).

Ser-9 contributes to the substrate binding site. Positions 34, 36, and 68 each coordinate a divalent metal cation. Asp-36 acts as the Proton acceptor in catalysis. Substrate is bound by residues His-68, 144 to 147 (GFGG), 177 to 179 (DGG), and 199 to 200 (GS). Asp-177 is a binding site for a divalent metal cation. Catalysis depends on Asp-177, which acts as the Proton donor.

Belongs to the ribulose-phosphate 3-epimerase family. A divalent metal cation is required as a cofactor.

It carries out the reaction D-ribulose 5-phosphate = D-xylulose 5-phosphate. It participates in carbohydrate degradation. Its function is as follows. Catalyzes the reversible epimerization of D-ribulose 5-phosphate to D-xylulose 5-phosphate. The sequence is that of Ribulose-phosphate 3-epimerase from Escherichia coli O157:H7.